A 259-amino-acid chain; its full sequence is Dihydroorotate dehydrogenase B (NAD(+)), electron transfer subunit (259 aa).

In terms of domain architecture, FAD-binding FR-type spans 2–102; that stretch reads MQKQNMIVVN…LGPLGHGFPV (101 aa). FAD contacts are provided by residues 53–56, 70–72, and 77–78; these read RPIS, LYR, and GT. The [2Fe-2S] cluster site is built by cysteine 221, cysteine 226, cysteine 229, and cysteine 246.

It belongs to the PyrK family. Heterotetramer of 2 PyrK and 2 PyrD type B subunits. [2Fe-2S] cluster is required as a cofactor. Requires FAD as cofactor.

Its pathway is pyrimidine metabolism; UMP biosynthesis via de novo pathway; orotate from (S)-dihydroorotate (NAD(+) route): step 1/1. Its function is as follows. Responsible for channeling the electrons from the oxidation of dihydroorotate from the FMN redox center in the PyrD type B subunit to the ultimate electron acceptor NAD(+). The polypeptide is Dihydroorotate dehydrogenase B (NAD(+)), electron transfer subunit (Bacillus cereus (strain Q1)).